Here is a 447-residue protein sequence, read N- to C-terminus: Gamma-glutamyl phosphate reductase (447 aa).

Belongs to the gamma-glutamyl phosphate reductase family.

Its subcellular location is the cytoplasm. The catalysed reaction is L-glutamate 5-semialdehyde + phosphate + NADP(+) = L-glutamyl 5-phosphate + NADPH + H(+). It functions in the pathway amino-acid biosynthesis; L-proline biosynthesis; L-glutamate 5-semialdehyde from L-glutamate: step 2/2. Its function is as follows. Catalyzes the NADPH-dependent reduction of L-glutamate 5-phosphate into L-glutamate 5-semialdehyde and phosphate. The product spontaneously undergoes cyclization to form 1-pyrroline-5-carboxylate. The protein is Gamma-glutamyl phosphate reductase of Methanosarcina mazei (strain ATCC BAA-159 / DSM 3647 / Goe1 / Go1 / JCM 11833 / OCM 88) (Methanosarcina frisia).